Reading from the N-terminus, the 687-residue chain is Adhesion G-protein coupled receptor G1 (687 aa).

The signal sequence occupies residues 1 to 25; that stretch reads MTAQSLLQTTLFLLSLLFLVQGAHG. 26 to 33 contacts heparin; that stretch reads RGHREDFR. Topologically, residues 26 to 402 are extracellular; it reads RGHREDFRFC…VEVDAVHKHY (377 aa). 2 disulfide bridges follow: Cys35-Cys91 and Cys121-Cys177. N-linked (GlcNAc...) asparagine glycans are attached at residues Asn39, Asn148, and Asn171. Residue 190-200 participates in heparin binding; sequence LKHPQKASRRP. The GAIN-B domain occupies 224–395; it reads DTVSFEEDRI…AVLMVSSVEV (172 aa). Asn234, Asn303, Asn324, and Asn341 each carry an N-linked (GlcNAc...) asparagine glycan. Intrachain disulfides connect Cys346-Cys377 and Cys366-Cys379. Residues 346–395 are GPS; that stretch reads CVFWVEDPTLSSPGHWSSAGCETVRRETQTSCFCNHLTYFAVLMVSSVEV. Positions 384–397 are stachel; the sequence is YFAVLMVSSVEVDA. The helical transmembrane segment at 403 to 423 threads the bilayer; sequence LSLLSYVGCVVSALACIVTIA. Residues 424 to 442 lie on the Cytoplasmic side of the membrane; that stretch reads AYLCSRRKPRDYTIKVHMN. Residues 443–463 form a helical membrane-spanning segment; it reads LLLAVFLLDTSFLLSEPVALT. The Extracellular segment spans residues 464–470; it reads GSEAGCR. A helical transmembrane segment spans residues 471–491; it reads ASAIFLHFSLLACLSWMGLEG. Residues 492-512 are Cytoplasmic-facing; that stretch reads YNLYRLVVEVFGTYVPGYLLK. The helical transmembrane segment at 513-533 threads the bilayer; it reads LSAMGWGFPIFLVTLVALVDV. Residues 534–570 lie on the Extracellular side of the membrane; that stretch reads DNYGPIILAVHRTPEGVIYPSMCWIRDSLVSYITNLG. A helical membrane pass occupies residues 571-591; that stretch reads LFSLVFLFNMAMLATMVVQIL. Residues 592 to 603 lie on the Cytoplasmic side of the membrane; sequence RLRPHTQKWSHV. Residues 604-624 traverse the membrane as a helical segment; sequence LTLLGLSLVLGLPWALIFFSF. The Extracellular segment spans residues 625-630; that stretch reads ASGTFQ. A helical membrane pass occupies residues 631-651; sequence LVVLYLFSIITSFQGFLIFIW. The Cytoplasmic portion of the chain corresponds to 652 to 687; sequence YWSMRLQARGGPSPLKSNSDSARLPISSGSTSSSRI. The interval 664–687 is disordered; the sequence is SPLKSNSDSARLPISSGSTSSSRI. A compositionally biased stretch (low complexity) spans 678-687; sequence SSGSTSSSRI.

This sequence belongs to the G-protein coupled receptor 2 family. LN-TM7 subfamily. Heterodimer of 2 chains generated by proteolytic processing; the large extracellular N-terminal fragment (ADGRG1 NT) and the membrane-bound C-terminal fragment (ADGRG1-CT) predominantly remain associated and non-covalently linked. ADGRG1 NT self-associates in a trans-trans manner; the homophilic interaction enhances receptor signaling. Interacts with TGM2. Interacts with heparin; leading to the reduction of ADGRG1 shedding. Interacts with COL3A1. Part of a GPCR-tetraspanin complex at least consisting of ADGRG1, CD81, eventually CD9, and GNA11 in which CD81 is enhancing the association of ADGRG1 with GNA11. Post-translationally, autoproteolytically cleaved into 2 fragments; the large extracellular N-terminal fragment (ADGRG1 NT) and the membrane-bound C-terminal fragment (ADGRG1 CT) predominantly remain associated and non-covalently linked. Shedding to yield the secreted ADGRG1 N-terminal fragment seems to involve metalloprotease(s). In terms of processing, ubiquitinated. Undergoes polyubiquitination upon activation.

The protein localises to the cell membrane. It localises to the secreted. Its subcellular location is the membrane raft. Forms a heterodimer of 2 chains generated by proteolytic processing that remain associated through non-covalent interactions mediated by the GAIN-B domain. In the inactivated receptor, the Stachel sequence (also named stalk) is embedded in the GAIN-B domain, where it adopts a beta-strand conformation. On activation, the Stachel moves into the 7 transmembrane region and adopts a twisted hook-shaped configuration that forms contacts within the receptor, leading to coupling of a G-alpha protein, which activates signaling. The cleaved GAIN-B and N-terminal domains can then dissociate from the rest of the receptor. Adhesion G-protein coupled receptor (aGPCR) for steroid hormone 17alpha-hydroxypregnenolone (17-OH), which is involved in cell adhesion and cell-cell interactions. Ligand binding causes a conformation change that triggers signaling via guanine nucleotide-binding proteins (G proteins) and modulates the activity of downstream effectors, such as RhoA pathway. ADGRG1 is coupled to G(12) and/or G(13) G proteins (GNA12 and GNA13, respectively) and mediates the activation Rho small GTPases. Acts as a potent suppressor of ferroptosis: binding to 17-OH-binding initiates signaling that down-regulates CD36 and alleviates ferroptosis-induced liver injury. Ligand-binding also induces cell adhesion activity via association with proteins such as collagen III/COL3A1 and TGM2. Mediates cell matrix adhesion in developing neurons and hematopoietic stem cells. Involved in cortical development, specifically in maintenance of the pial basement membrane integrity and in cortical lamination: association with COL3A1 in the developing brain inhibits neuronal migration via activation of the RhoA pathway. Together with TGM2, acts as a regulator of myelination and myelin repair in oligodendrocyte precursor cells. Acts as a hemostatic sensor of shear force: G protein-coupled receptor signaling is activated in response to shear force in platelets, promoting G(13) G protein signaling, and platelet shape change and aggregation in a COL3A1-dependent manner. Acts as an inhibitor of VEGFA production thereby inhibiting angiogenesis through a signaling pathway mediated by PRKCA. Plays a role in the maintenance of hematopoietic stem cells in bone marrow niche. Plays an essential role in testis development. The polypeptide is Adhesion G-protein coupled receptor G1 (ADGRG1) (Gorilla gorilla gorilla (Western lowland gorilla)).